The sequence spans 316 residues: Aspartate carbamoyltransferase catalytic subunit (316 aa).

The carbamoyl phosphate site is built by Arg56 and Thr57. An L-aspartate-binding site is contributed by Lys84. Carbamoyl phosphate contacts are provided by Arg106, His139, and Gln142. L-aspartate contacts are provided by Arg172 and Arg226. Carbamoyl phosphate is bound by residues Gly267 and Pro268.

The protein belongs to the aspartate/ornithine carbamoyltransferase superfamily. ATCase family. In terms of assembly, heterododecamer (2C3:3R2) of six catalytic PyrB chains organized as two trimers (C3), and six regulatory PyrI chains organized as three dimers (R2).

The catalysed reaction is carbamoyl phosphate + L-aspartate = N-carbamoyl-L-aspartate + phosphate + H(+). The protein operates within pyrimidine metabolism; UMP biosynthesis via de novo pathway; (S)-dihydroorotate from bicarbonate: step 2/3. Catalyzes the condensation of carbamoyl phosphate and aspartate to form carbamoyl aspartate and inorganic phosphate, the committed step in the de novo pyrimidine nucleotide biosynthesis pathway. The polypeptide is Aspartate carbamoyltransferase catalytic subunit (Mycobacterium sp. (strain JLS)).